A 264-amino-acid chain; its full sequence is Thymidylate synthase (264 aa).

Residue arginine 21 participates in dUMP binding. Histidine 51 lines the (6R)-5,10-methylene-5,6,7,8-tetrahydrofolate pocket. Position 126–127 (arginine 126–arginine 127) interacts with dUMP. Cysteine 146 serves as the catalytic Nucleophile. DUMP is bound by residues arginine 166–aspartate 169, asparagine 177, and histidine 207–tyrosine 209. Aspartate 169 is a binding site for (6R)-5,10-methylene-5,6,7,8-tetrahydrofolate. Residue alanine 263 participates in (6R)-5,10-methylene-5,6,7,8-tetrahydrofolate binding.

Belongs to the thymidylate synthase family. Bacterial-type ThyA subfamily. In terms of assembly, homodimer.

It is found in the cytoplasm. It carries out the reaction dUMP + (6R)-5,10-methylene-5,6,7,8-tetrahydrofolate = 7,8-dihydrofolate + dTMP. Its pathway is pyrimidine metabolism; dTTP biosynthesis. Catalyzes the reductive methylation of 2'-deoxyuridine-5'-monophosphate (dUMP) to 2'-deoxythymidine-5'-monophosphate (dTMP) while utilizing 5,10-methylenetetrahydrofolate (mTHF) as the methyl donor and reductant in the reaction, yielding dihydrofolate (DHF) as a by-product. This enzymatic reaction provides an intracellular de novo source of dTMP, an essential precursor for DNA biosynthesis. The protein is Thymidylate synthase of Shewanella sp. (strain MR-4).